The primary structure comprises 215 residues: Large ribosomal subunit protein uL3 (215 aa).

The tract at residues 136-155 (GVSISHRSHGSTGQRQDPGK) is disordered. N5-methylglutamine is present on Q151.

The protein belongs to the universal ribosomal protein uL3 family. In terms of assembly, part of the 50S ribosomal subunit. Forms a cluster with proteins L14 and L19. Methylated by PrmB.

In terms of biological role, one of the primary rRNA binding proteins, it binds directly near the 3'-end of the 23S rRNA, where it nucleates assembly of the 50S subunit. In Rickettsia canadensis (strain McKiel), this protein is Large ribosomal subunit protein uL3.